The chain runs to 457 residues: Argininosuccinate lyase (457 aa).

Belongs to the lyase 1 family. Argininosuccinate lyase subfamily.

It localises to the cytoplasm. It catalyses the reaction 2-(N(omega)-L-arginino)succinate = fumarate + L-arginine. The protein operates within amino-acid biosynthesis; L-arginine biosynthesis; L-arginine from L-ornithine and carbamoyl phosphate: step 3/3. The polypeptide is Argininosuccinate lyase (Shigella boydii serotype 18 (strain CDC 3083-94 / BS512)).